A 264-amino-acid chain; its full sequence is Thymidylate synthase (264 aa).

Arginine 21 lines the dUMP pocket. Residue histidine 51 participates in (6R)-5,10-methylene-5,6,7,8-tetrahydrofolate binding. 126–127 (RR) contributes to the dUMP binding site. Residue cysteine 146 is the Nucleophile of the active site. DUMP-binding positions include 166-169 (RSAD), asparagine 177, and 207-209 (HLY). Position 169 (aspartate 169) interacts with (6R)-5,10-methylene-5,6,7,8-tetrahydrofolate. Serine 263 serves as a coordination point for (6R)-5,10-methylene-5,6,7,8-tetrahydrofolate.

Belongs to the thymidylate synthase family. Bacterial-type ThyA subfamily. As to quaternary structure, homodimer.

The protein resides in the cytoplasm. It carries out the reaction dUMP + (6R)-5,10-methylene-5,6,7,8-tetrahydrofolate = 7,8-dihydrofolate + dTMP. The protein operates within pyrimidine metabolism; dTTP biosynthesis. Catalyzes the reductive methylation of 2'-deoxyuridine-5'-monophosphate (dUMP) to 2'-deoxythymidine-5'-monophosphate (dTMP) while utilizing 5,10-methylenetetrahydrofolate (mTHF) as the methyl donor and reductant in the reaction, yielding dihydrofolate (DHF) as a by-product. This enzymatic reaction provides an intracellular de novo source of dTMP, an essential precursor for DNA biosynthesis. This chain is Thymidylate synthase, found in Laribacter hongkongensis (strain HLHK9).